A 224-amino-acid chain; its full sequence is Ankyrin repeat domain-containing protein 45 (224 aa).

ANK repeat units lie at residues 46 to 76 (VGRN…DVNE) and 80 to 109 (RGYS…DFQA).

As to expression, widely expressed.

The protein localises to the cytoplasm. The protein resides in the midbody. It localises to the midbody ring. Its subcellular location is the cleavage furrow. May play a role during cell division. This is Ankyrin repeat domain-containing protein 45 from Danio rerio (Zebrafish).